A 445-amino-acid polypeptide reads, in one-letter code: Putative H/ACA ribonucleoprotein complex subunit 4 (445 aa).

A disordered region spans residues 1-32 (MGKKDKRSKLEGDELAEAQQKGSFQLPSSNET). Polar residues predominate over residues 20–32 (QKGSFQLPSSNET). The active-site Nucleophile is the Asp113. In terms of domain architecture, PUA spans 284 to 359 (HKRVVVKDSC…IVAKSKRVIM (76 aa)). Residues 407-445 (TDKVKKEQEDKEDEEEEEAPKKKSKKAAKKEVSSSSDSE) form a disordered region.

Belongs to the pseudouridine synthase TruB family. Component of the small nucleolar ribonucleoprotein particle containing H/ACA-type snoRNAs (H/ACA snoRNPs).

The protein localises to the nucleus. The protein resides in the nucleolus. It carries out the reaction a uridine in RNA = a pseudouridine in RNA. In terms of biological role, plays a central role in ribosomal RNA processing. Probable catalytic subunit of H/ACA small nucleolar ribonucleoprotein (H/ACA snoRNP) complex, which catalyzes pseudouridylation of rRNA. This involves the isomerization of uridine such that the ribose is subsequently attached to C5, instead of the normal N1. Pseudouridine ('psi') residues may serve to stabilize the conformation of rRNAs. The polypeptide is Putative H/ACA ribonucleoprotein complex subunit 4 (Caenorhabditis briggsae).